We begin with the raw amino-acid sequence, 189 residues long: dCTP deaminase (189 aa).

DCTP-binding positions include 112-117, 136-138, Gln-157, Tyr-171, and Gln-181; these read KSTYAR and TLE. The Proton donor/acceptor role is filled by Glu-138.

It belongs to the dCTP deaminase family. In terms of assembly, homotrimer.

It catalyses the reaction dCTP + H2O + H(+) = dUTP + NH4(+). It functions in the pathway pyrimidine metabolism; dUMP biosynthesis; dUMP from dCTP (dUTP route): step 1/2. Functionally, catalyzes the deamination of dCTP to dUTP. This chain is dCTP deaminase, found in Albidiferax ferrireducens (strain ATCC BAA-621 / DSM 15236 / T118) (Rhodoferax ferrireducens).